We begin with the raw amino-acid sequence, 472 residues long: Guanine nucleotide-binding protein alpha-1 subunit (472 aa).

The N-myristoyl glycine moiety is linked to residue G2. C3 carries S-palmitoyl cysteine lipidation. The G-alpha domain maps to 40 to 472 (NEIKLLLLGA…QQNLKKIGII (433 aa)). The tract at residues 43 to 56 (KLLLLGAGESGKST) is G1 motif. E51, S52, G53, K54, S55, and T56 together coordinate GTP. Mg(2+) is bound at residue S55. The segment at 127–235 (LDYINASVAG…REIQGQNRRN (109 aa)) is insert; not present in other G-proteins. A disordered region spans residues 162–199 (GRAKAAFDEDGNISNVKSDTDRDAETVTQNEDADRNNS). Residue K165 forms a Glycyl lysine isopeptide (Lys-Gly) (interchain with G-Cter in ubiquitin) linkage. The interval 292–300 (DILKGRIKT) is G2 motif. L294, T300, G322, N388, K389, D391, and A444 together coordinate GTP. T300 contributes to the Mg(2+) binding site. The segment at 315–324 (FKVLDAGGQR) is G3 motif. The interval 384–391 (ILFLNKID) is G4 motif. Residues 442–447 (TCATDT) form a G5 motif region.

Belongs to the G-alpha family. G(q) subfamily. In terms of assembly, g proteins are composed of 3 units; alpha, beta and gamma. The alpha chain contains the guanine nucleotide binding site. In its GDP-bound form, binds to the G protein beta-gamma dimer STE4-STE18. Directly interacts with the beta subunit STE4. Probably forms preactivation complexes with unligated receptors STE2 and STE3. Interacts with FUS3. Pheromone-induced activation of GPA1 increases its association with FUS3. Interacts with SCP160. SCP160 binds specifically to the GTP-bound form of GPA1. Interacts with the phosphatidylinositol 3-kinase (PI3K) subunits VPS15 and VPS34 at the endosome. The GTP-bound form of GPA1 binds directly and selectively to the catalytic subunit VPS34, while the GDP-bound form binds to VPS15, which appears to function as an alternative G protein beta subunit for GPA1. Interacts with regulators of G protein signaling (RGS) proteins MDM1, RAX1, RGS2 and SST2, but SST2 alone binds preferentially to the transition state conformation of GPA1, indicating that it acts as a GAP for this G protein. Requires Mg(2+) as cofactor. N-myristoylation by NMT1 is pheromone-stimulated and required for palmitoylation of Cys-3. This lipid modification anchors the protein to membranes. Depalmitoylated by YLR118C/APT1. In terms of processing, monoubiquitination targets the protein for degradation to the vacuole, and polyubiquitination tags the protein for degradation by the proteasome. This may be an additional signaling regulation mechanism.

Its subcellular location is the cell membrane. It is found in the endosome membrane. Alternates between an inactive form bound to GDP and an active form bound to GTP. Activated by the G protein coupled receptors (GPCRs) STE2 and STE3, which serve as guanine nucleotide-exchange factors (GEFs), and inactivated by SST2, probably acting as a GTPase-activating protein (GAP). Alpha subunit of the heterotrimeric guanine nucleotide-binding protein (G protein) that mediates mating pheromone signal transduction. Binding of alpha-factor or a-factor to its cognate transmembrane receptor STE2 and STE3, respectively, allows the receptor to serve as a guanine nucleotide exchange factor (GEF) on GPA1. The exchange of GDP for GTP on the G protein alpha subunit alters its interaction with the G protein beta subunit STE4, leading to dissociation of the G protein beta-gamma dimer STE4-STE18. The dissociated subunits activate downstream effectors to activate the mating response pathway and induce changes necessary to produce mating-competent cells. STE4-STE18 activate the downstream pheromone signaling MAP kinase cascade leading to expression of mating-specific genes, inducing cell cycle arrest in G1, promoting polarized cell growth to form mating projections (shmoos), and establishing the changes in plasma membrane, cell wall and nuclear envelope to permit cell-cell fusion (plasmogamy) and fusion of the two haploid nuclei (karyogamy). GPA1 transmits a signal that requires direct binding to the effector enzyme PI3K located at the endosome, promoting increased PI3 production. The intrinsic GTPase activity of GPA1 determines the duration of signaling, and is dramatically accelerated by the RGS protein SST2. In unstimulated cells, GDP-bound GPA1 sequesters the G protein beta-gamma subunit STE4-STE18, preventing it from activating the downstream effectors. Also down-regulates the signal by inhibiting the pheromone-induced accumulation of FUS3 in the nucleus. The chain is Guanine nucleotide-binding protein alpha-1 subunit (GPA1) from Saccharomyces cerevisiae (strain ATCC 204508 / S288c) (Baker's yeast).